The following is a 524-amino-acid chain: Calcium-dependent protein kinase 1 (524 aa).

Residues 1 to 34 (MGCSQSSNVKDFKTRRSKFTNGNNYGKSGNNKNS) are disordered. Glycine 2 carries the N-myristoyl glycine lipid modification. Cysteine 3 carries the S-palmitoyl cysteine lipid modification. Residues 10-20 (KDFKTRRSKFT) carry the Basic cluster involved in membrane binding motif. Serine 17, serine 28, and serine 34 each carry phosphoserine; by autocatalysis. A compositionally biased stretch (low complexity) spans 21 to 32 (NGNNYGKSGNNK). Positions 56–325 (YFKVRKLGSG…AKEALNSKWI (270 aa)) constitute a Protein kinase domain. ATP is bound by residues 62-70 (LGSGAYGEV) and lysine 85. Position 64 is a phosphoserine; by PKG; by autocatalysis (serine 64). A Phosphothreonine; by autocatalysis modification is found at threonine 100. Serine 118 carries the phosphoserine; by autocatalysis modification. Residue aspartate 191 is the Proton acceptor of the active site. Phosphoserine is present on serine 217. Serine 220 carries the phosphoserine; by autocatalysis modification. Threonine 231 is modified (phosphothreonine; by PKG; by autocatalysis). A Phosphoserine; by autocatalysis modification is found at serine 335. The J domain autoinhibitory motif motif lies at 346 to 353 (NMRKFEGS). The interval 346 to 364 (NMRKFEGSQKLAQAAILFI) is j domain. The J domain interacts with the EF-hand domains motif lies at 354-364 (QKLAQAAILFI). EF-hand domains lie at 372 to 407 (EERK…LRSF), 416 to 451 (NVEE…KQIL), 452 to 487 (FSEE…TSIS), and 488 to 521 (EQMW…ICDN). Ca(2+) contacts are provided by aspartate 385, asparagine 387, aspartate 389, glutamine 391, glutamate 396, aspartate 429, aspartate 431, asparagine 433, tyrosine 435, glutamate 440, aspartate 465, aspartate 467, serine 469, lysine 471, glutamate 476, aspartate 499, asparagine 501, aspartate 503, methionine 505, and glutamate 510.

This sequence belongs to the protein kinase superfamily. Ser/Thr protein kinase family. CDPK subfamily. As to quaternary structure, monomer. Forms a high molecular weight (250 and 400 kDa) complex. Forms a complex composed of CDPK1, PKA regulatory subunit PKAr and 14-3-3I; the complex is formed in merozoites in response to low extracellular level of K(+) and may play a role in microneme secretion. Interacts (when phosphorylated) with 14-3-3I in a Ca(2+)-independent manner; the interaction does not regulate CDPK1 catalytic activity but is required for merozoite invasion of host erythrocytes. Interacts with PKA regulatory subunit PKAr; in a Ca(2+)-dependent manner. Interacts with SERA5 p50 in the late schizont stage. Interacts with inner membrane complex protein IMC1g in late schizonts. Interacts with rhoptry protein RhopH3 in merozoites. The cofactor is Mg(2+). Post-translationally, myristoylated. Myristoylation, palmitoylation and the basic cluster motif are required for the localization to the parasitophorous vacuole membrane. In terms of processing, palmitoylated. Palmitoylation increases in merozoites in response to low level of extracellular K(+) in the host blood. Myristoylation, palmitoylation and the basic cluster motif are required for the localization to the parasitophorous vacuole membrane. Phosphorylation at Ser-64 occurs at late schizont stage and regulates CDPK1 protein-protein interaction. Phosphorylated at Ser-28, Ser-34 and Ser-64 in merozoites in response to low extracellular level of K(+). Phosphorylation at Thr-231 may regulate CDPK1 kinase activity. Phosphorylation increases in response to an increase in intracellular Ca(2+) levels. Autophosphorylated in vitro. Autophosphorylation does not affect membrane localization in vitro.

The protein localises to the membrane. It is found in the cell membrane. Its subcellular location is the parasitophorous vacuole membrane. The protein resides in the cytoplasm. It localises to the cell projection. The protein localises to the cilium. It is found in the flagellum. Its subcellular location is the host cell membrane. The enzyme catalyses L-seryl-[protein] + ATP = O-phospho-L-seryl-[protein] + ADP + H(+). It catalyses the reaction L-threonyl-[protein] + ATP = O-phospho-L-threonyl-[protein] + ADP + H(+). With respect to regulation, activated by calcium. Upon calcium binding to the EF-hand domains, the C-terminus of the junction domain (J domain) undergoes a conformational change which results in the dissociation of the pseudo-substrate inhibitory motif from the catalytic domain. This, in turn may facilitate the autophosphorylation of the activation loop at Thr-231, which leads to the kinase activation. May be negatively regulated by PKA-mediated phosphorylation. Inhibited by purfalcamine. In terms of biological role, calcium-dependent protein kinase which acts as a sensor and effector of intracellular Ca(2+) levels probably in part downstream of cGMP-activated PKG kinase. By phosphorylating various proteins, required for microneme secretion and thus merozoite egress from and invasion of host erythrocytes. During gametogenesis, essential for the development of both male and female gametes. Phosphorylates SERA5 p50 which enhances SERA5 p50 protease activity; however, SERA5 p50 protease activity has been shown in other studies to be controversial. Probably by phosphorylating SERA5 p50, plays a role in merozoite egress from host erythrocytes. Probably prior or during merozoite invasion of host erythrocytes, phosphorylates rhoptry protein RhopH3 which is required for RhopH3 localization to rhoptries and for its secretion. Probably in late schizonts, phosphorylates myosin A tail domain-interacting protein MTIP and glideosome-associated protein 45 GAP45, both of which are components of the motor complex that generates the force required by the parasite to invade host cells. In late schizonts, phosphorylates inner membrane complex protein IMC1g. In late schizonts, phosphorylates PKA regulatory subunit PKAr in a calcium-dependent manner, which may contribute to the dissociation of regulatory PKAr and catalytic PKAc subunits and promote the activation of PKAc. May phosphorylate raf kinase inhibitory protein RKIP which in turn may regulate CDPK1 catalytic activity. May phosphorylate proteins of the host erythrocyte membranes. The polypeptide is Calcium-dependent protein kinase 1 (Plasmodium falciparum (isolate 3D7)).